Here is a 385-residue protein sequence, read N- to C-terminus: Glucans biosynthesis protein C (385 aa).

10 consecutive transmembrane segments (helical) span residues 17-37 (AWLMLLGIPFHISLIYSSHTW), 60-80 (MQVFFVISGYFSYMLFLRYPL), 91-111 (VGIPMLTAIPLLTLPQFIMLQ), 137-157 (ISHLWFLLVLVVMTTLCVWIF), 173-193 (KFSMVKLSVIFLCLGIGYAVI), 212-232 (FIVMQTLFYLPFFILGALAFI), 239-259 (LFTTPSRGCTLAAALAFVAYL), 274-294 (TESVITMVLGLWMVNVVFSFG), 311-331 (ASLFIYLVHHPLTLFFGAYIT), and 338-358 (WLGFLCGLIFVVGIAIILYEI).

This sequence belongs to the acyltransferase 3 family. OpgC subfamily.

It localises to the cell membrane. It functions in the pathway glycan metabolism; osmoregulated periplasmic glucan (OPG) biosynthesis. Its function is as follows. Necessary for the succinyl substitution of periplasmic glucans. Could catalyze the transfer of succinyl residues from the cytoplasmic side of the membrane to the nascent glucan backbones on the periplasmic side of the membrane. The chain is Glucans biosynthesis protein C from Escherichia coli O6:K15:H31 (strain 536 / UPEC).